The chain runs to 423 residues: MDKLLLRGNGPLRGELRISGAKNAALPCLAATLLAREPVRLCNIPHLRDITTTLELLSTLGARVLVDGQLGIEVDPRPVHSVVAPYELVKTMRASILVLGPLLARHGSAEVSLPGGCAIGSRPVSVHLSGLQALGAEITVEDGFVKAQAARLRGTRIVMEMVSVTGTENLLMAATLAEGRTILENAAREPEIVDLARCLSAMGARISGAGTSVIEIEGVAELHGAEHSVVPDRIETGTYLVAAAMTGGDICLKRTDAGLLESVLLKLKEAGAEVTTGADTIRIRMKRRPRAVDVRTAPFPAFPTDMQAQFMAMNCIAEGSSVVTETIFENRFMHVSELQRLGADINADGKTAVVRGVQRLRGAPVMATDLRASASLVLAGLVAEGETLIDRIYHLDRGYEVIEEKLSALGADIRRISNTRSVA.

22 to 23 (KN) contacts phosphoenolpyruvate. Arg-93 is a UDP-N-acetyl-alpha-D-glucosamine binding site. The active-site Proton donor is the Cys-117. The residue at position 117 (Cys-117) is a 2-(S-cysteinyl)pyruvic acid O-phosphothioketal. Residues Asp-305 and Ile-327 each contribute to the UDP-N-acetyl-alpha-D-glucosamine site.

This sequence belongs to the EPSP synthase family. MurA subfamily.

Its subcellular location is the cytoplasm. The catalysed reaction is phosphoenolpyruvate + UDP-N-acetyl-alpha-D-glucosamine = UDP-N-acetyl-3-O-(1-carboxyvinyl)-alpha-D-glucosamine + phosphate. The protein operates within cell wall biogenesis; peptidoglycan biosynthesis. Cell wall formation. Adds enolpyruvyl to UDP-N-acetylglucosamine. The chain is UDP-N-acetylglucosamine 1-carboxyvinyltransferase from Acidithiobacillus ferrooxidans (strain ATCC 23270 / DSM 14882 / CIP 104768 / NCIMB 8455) (Ferrobacillus ferrooxidans (strain ATCC 23270)).